The primary structure comprises 255 residues: Polycomb group RING finger protein 5 (255 aa).

Residues 18 to 57 (CYICKGYLIKPTTVTECLHTFCKTCIVQHFEDSNDCPRCG) form an RING-type zinc finger. Residues 97-132 (WKKNKPQENGQDDMSKVDKPKVDEEGDENQDDKDYH) form a disordered region. The span at 109 to 119 (DMSKVDKPKVD) shows a compositional bias: basic and acidic residues.

In terms of assembly, component of a PRC1-like complex that contains PCGF5, RNF2 and UBE2D3. Interacts with RNF2; the interaction is direct. Interacts with CBX6, CBX7 and CBX8. Interacts with AUTS2; the interaction is direct. Identified in a complex that contains AUTS2, PCGF5, CSNK2B and RNF2.

It is found in the nucleus. The protein resides in the nucleoplasm. In terms of biological role, component of a Polycomb group (PcG) multiprotein PRC1-like complex, a complex class required to maintain the transcriptionally repressive state of many genes, including Hox genes, throughout development. PcG PRC1 complex acts via chromatin remodeling and modification of histones; it mediates monoubiquitination of histone H2A 'Lys-119', rendering chromatin heritably changed in its expressibility. Within the PRC1-like complex, regulates RNF2 ubiquitin ligase activity. Plays a redundant role with PCGF3 as part of a PRC1-like complex that mediates monoubiquitination of histone H2A 'Lys-119' on the X chromosome and is required for normal silencing of one copy of the X chromosome in XX females. This is Polycomb group RING finger protein 5 (PCGF5) from Bos taurus (Bovine).